A 156-amino-acid polypeptide reads, in one-letter code: MPRRRVIGQRKILSDPKFGSDLLAKFVNILMVDGKKSTAEKIVYTALDTMTERSGEECLSVFEKALENVRPAVEVKSRRVGGSTYQVPVEVRPVRRNALAMRWLVEAARKRGEKSMAQRLAGEMLDAADNKGTAVKKREDVHRMADANKAFAHYRW.

The protein belongs to the universal ribosomal protein uS7 family. Part of the 30S ribosomal subunit. Contacts proteins S9 and S11.

In terms of biological role, one of the primary rRNA binding proteins, it binds directly to 16S rRNA where it nucleates assembly of the head domain of the 30S subunit. Is located at the subunit interface close to the decoding center, probably blocks exit of the E-site tRNA. The protein is Small ribosomal subunit protein uS7 of Photobacterium profundum (strain SS9).